The sequence spans 95 residues: Small ribosomal subunit protein bS6 (95 aa).

The protein belongs to the bacterial ribosomal protein bS6 family.

In terms of biological role, binds together with bS18 to 16S ribosomal RNA. This is Small ribosomal subunit protein bS6 from Clostridium novyi (strain NT).